Here is a 487-residue protein sequence, read N- to C-terminus: CUGBP Elav-like family member 1 (487 aa).

M1 carries the N-acetylmethionine modification. T4 carries the post-translational modification Phosphothreonine. RRM domains follow at residues 16 to 99 and 108 to 188; these read IKMF…PADS and RKLF…FADT. K109 is covalently cross-linked (Glycyl lysine isopeptide (Lys-Gly) (interchain with G-Cter in SUMO2)). Phosphoserine occurs at positions 179 and 303. A disordered region spans residues 277 to 310; that stretch reads TPSGTNALTTSSSPLSVLTSSAGSSPSSSSSNSV. Residues 283–310 show a composition bias toward low complexity; that stretch reads ALTTSSSPLSVLTSSAGSSPSSSSSNSV. In terms of domain architecture, RRM 3 spans 402-480; that stretch reads ANLFIYHLPQ…KRLKVQLKRS (79 aa).

The protein belongs to the CELF/BRUNOL family. As to quaternary structure, interacts with HNRNPH1; the interaction in RNA-dependent. Interacts with PARN. Component of an EIF2 complex at least composed of CELF1/CUGBP1, CALR, CALR3, EIF2S1, EIF2S2, HSP90B1 and HSPA5. Associates with polysomes.

Its subcellular location is the nucleus. The protein localises to the cytoplasm. Functionally, RNA-binding protein implicated in the regulation of several post-transcriptional events. Involved in pre-mRNA alternative splicing, mRNA translation and stability. Mediates exon inclusion and/or exclusion in pre-mRNA that are subject to tissue-specific and developmentally regulated alternative splicing. Specifically activates exon 5 inclusion of cardiac isoforms of TNNT2 during heart remodeling at the juvenile to adult transition. Acts both as an activator and as a repressor of a pair of coregulated exons: promotes inclusion of the smooth muscle (SM) exon but exclusion of the non-muscle (NM) exon in actinin pre-mRNAs. Activates SM exon 5 inclusion by antagonizing the repressive effect of PTB. Promotes exclusion of exon 11 of the INSR pre-mRNA. Inhibits, together with HNRNPH1, insulin receptor (IR) pre-mRNA exon 11 inclusion in myoblast. Increases translation and controls the choice of translation initiation codon of CEBPB mRNA. Increases mRNA translation of CEBPB in aging liver. Increases translation of CDKN1A mRNA by antagonizing the repressive effect of CALR3. Mediates rapid cytoplasmic mRNA deadenylation. Recruits the deadenylase PARN to the poly(A) tail of EDEN-containing mRNAs to promote their deadenylation. Required for completion of spermatogenesis. Binds to (CUG)n triplet repeats in the 3'-UTR of transcripts such as DMPK and to Bruno response elements (BREs). Binds to muscle-specific splicing enhancer (MSE) intronic sites flanking the alternative exon 5 of TNNT2 pre-mRNA. Binds to AU-rich sequences (AREs or EDEN-like) localized in the 3'-UTR of JUN and FOS mRNAs. Binds to the IR RNA. Binds to the 5'-region of CDKN1A and CEBPB mRNAs. Binds with the 5'-region of CEBPB mRNA in aging liver. May be a specific regulator of miRNA biogenesis. Binds to primary microRNA pri-MIR140 and, with CELF2, negatively regulates the processing to mature miRNA. The chain is CUGBP Elav-like family member 1 (Celf1) from Rattus norvegicus (Rat).